Reading from the N-terminus, the 120-residue chain is Ribosome-binding factor A (120 aa).

This sequence belongs to the RbfA family. As to quaternary structure, monomer. Binds 30S ribosomal subunits, but not 50S ribosomal subunits or 70S ribosomes.

The protein resides in the cytoplasm. In terms of biological role, one of several proteins that assist in the late maturation steps of the functional core of the 30S ribosomal subunit. Associates with free 30S ribosomal subunits (but not with 30S subunits that are part of 70S ribosomes or polysomes). Required for efficient processing of 16S rRNA. May interact with the 5'-terminal helix region of 16S rRNA. The chain is Ribosome-binding factor A from Rickettsia felis (strain ATCC VR-1525 / URRWXCal2) (Rickettsia azadi).